The chain runs to 142 residues: ATP synthase epsilon chain (142 aa).

It belongs to the ATPase epsilon chain family. In terms of assembly, F-type ATPases have 2 components, CF(1) - the catalytic core - and CF(0) - the membrane proton channel. CF(1) has five subunits: alpha(3), beta(3), gamma(1), delta(1), epsilon(1). CF(0) has three main subunits: a, b and c.

It is found in the cell inner membrane. In terms of biological role, produces ATP from ADP in the presence of a proton gradient across the membrane. The sequence is that of ATP synthase epsilon chain from Histophilus somni (strain 129Pt) (Haemophilus somnus).